A 274-amino-acid chain; its full sequence is RsbT co-antagonist protein RsbRA (274 aa).

Residues 150-265 (SAPLIPVFEN…KGIQTALEMT (116 aa)) form the STAS domain. 2 positions are modified to phosphothreonine: Thr-171 and Thr-205.

Interacts with RsbRB and RsbS in the stressosome. The stressosome probably also contains RsbRC and RsbRD. Phosphorylated by RsbT. This threonine phosphorylation abrogates the ability of RsbRA to stimulate RsbT in vitro.

Functionally, acts as a positive regulator of sigma-B activity in response to salt and heat stress by stimulating the activity of the RsbT kinase toward RsbS in vitro. Its function is as follows. One of 4 functionally non-identical RsbR paralogs, it functions in the environmental signaling branch of the general stress response. In terms of biological role, negative regulator of sigma-B activity. Non-phosphorylated RsbS binds to RsbT, preventing its association with RsbU. Requires any one of RsbRA, RsbRB, RsbRC or RsbRD to sequester RsbT. When RsbS and the RsbR paralog(s) are phosphorylated, they release RsbT, which can then bind and activate RsbU. The protein is RsbT co-antagonist protein RsbRA (rsbRA) of Bacillus subtilis (strain 168).